We begin with the raw amino-acid sequence, 209 residues long: Thymidine kinase (209 aa).

Residues 9-16 (AAMNAGKS) and 88-91 (DEAQ) each bind ATP. Residue glutamate 89 is the Proton acceptor of the active site. 4 residues coordinate Zn(2+): cysteine 146, cysteine 148, cysteine 183, and histidine 186.

This sequence belongs to the thymidine kinase family. Homotetramer.

The protein resides in the cytoplasm. The enzyme catalyses thymidine + ATP = dTMP + ADP + H(+). The chain is Thymidine kinase from Legionella pneumophila (strain Paris).